The following is a 254-amino-acid chain: Dihydroorotate dehydrogenase B (NAD(+)), electron transfer subunit (254 aa).

The FAD-binding FR-type domain occupies 1 to 99 (MLQTEMKVIQ…LGPLGKGFDI (99 aa)). Residues 50 to 53 (RPIS), 67 to 69 (LYR), and 74 to 75 (GT) each bind FAD. [2Fe-2S] cluster is bound by residues C218, C223, C226, and C241.

This sequence belongs to the PyrK family. As to quaternary structure, heterotetramer of 2 PyrK and 2 PyrD type B subunits. It depends on [2Fe-2S] cluster as a cofactor. FAD serves as cofactor.

The protein operates within pyrimidine metabolism; UMP biosynthesis via de novo pathway; orotate from (S)-dihydroorotate (NAD(+) route): step 1/1. Responsible for channeling the electrons from the oxidation of dihydroorotate from the FMN redox center in the PyrD type B subunit to the ultimate electron acceptor NAD(+). The protein is Dihydroorotate dehydrogenase B (NAD(+)), electron transfer subunit of Listeria monocytogenes serotype 4b (strain F2365).